Reading from the N-terminus, the 563-residue chain is Beta-catenin-like protein 1 (563 aa).

M1 carries the post-translational modification N-acetylmethionine. The disordered stretch occupies residues 1 to 81; that stretch reads MDVGELLSYQ…EEEEPLDESS (81 aa). Positions 16–33 match the Nuclear localization signal motif; the sequence is KRPRDDEEEELKTRRKQT. Residues 34–45 are compositionally biased toward basic and acidic residues; sequence GPRERGRYREEE. Residues 66–78 are compositionally biased toward acidic residues; the sequence is DGEEEEEEEEPLD. HEAT repeat units follow at residues 79-129 and 134-176; these read ESSV…VVAT and YHLL…TLHE. K91 is subject to N6-acetyllysine. The short motif at 130 to 140 is the Nuclear export signal (NES) element; that stretch reads MPDLYHLLVEL. ARM repeat units follow at residues 178–228, 229–273, 274–323, 325–363, and 364–417; these read EEGA…MAEF, RPEM…LQDN, DENR…CLML, SNRERFLKGEGLQLMNLMLREKKVSRSSALKVLDHAMIG, and PEGT…LLRN. Position 389 is a phosphoserine (S389). Positions 476–540 form a coiled coil; that stretch reads DMEDEFYLRR…HIIKEYAENI (65 aa). Phosphoserine is present on S545.

Component of the PRP19-CDC5L splicing complex composed of a core complex comprising a homotetramer of PRPF19, CDC5L, PLRG1 and BCAS2, and at least three less stably associated proteins CTNNBL1, CWC15 and HSPA8. Interacts directly with CWC15 and CDC5L in the complex. Interacts with AICDA; the interaction is important for the antibody diversification activity of AICDA. Interacts with PRPF31 (via its NLS). Interacts (via its N-terminal NLS) with KPNA1 and KPNA2.

The protein localises to the nucleus. Component of the PRP19-CDC5L complex that forms an integral part of the spliceosome and is required for activating pre-mRNA splicing. Participates in AID/AICDA-mediated somatic hypermutation (SHM) and class-switch recombination (CSR), 2 processes resulting in the production of high-affinity, mutated isotype-switched antibodies. In Mus musculus (Mouse), this protein is Beta-catenin-like protein 1 (Ctnnbl1).